A 510-amino-acid polypeptide reads, in one-letter code: Glycogen synthase (510 aa).

Lysine 18 contacts ADP-alpha-D-glucose.

This sequence belongs to the glycosyltransferase 1 family. Bacterial/plant glycogen synthase subfamily.

It carries out the reaction [(1-&gt;4)-alpha-D-glucosyl](n) + ADP-alpha-D-glucose = [(1-&gt;4)-alpha-D-glucosyl](n+1) + ADP + H(+). Its pathway is glycan biosynthesis; glycogen biosynthesis. Synthesizes alpha-1,4-glucan chains using ADP-glucose. The protein is Glycogen synthase of Bordetella bronchiseptica (strain ATCC BAA-588 / NCTC 13252 / RB50) (Alcaligenes bronchisepticus).